The following is a 59-amino-acid chain: Potassium channel toxin alpha-KTx 15.2 (59 aa).

The N-terminal stretch at 1-22 (MKFSSIILLTLLICSMSKFGNC) is a signal peptide. At Gln-23 the chain carries Pyrrolidone carboxylic acid. Intrachain disulfides connect Cys-30–Cys-50, Cys-35–Cys-55, and Cys-39–Cys-57.

Belongs to the short scorpion toxin superfamily. Potassium channel inhibitor family. Alpha-KTx 15 subfamily. As to expression, expressed by the venom gland.

The protein resides in the secreted. In terms of biological role, blocks both human ERG1/Kv11.1/KCNH2 potassium channels (in a reversible manner) and A-type voltage-gated potassium channels Kv4/KCND (in an irreversible manner). The presence of the Kv4-associated proteins DPP6 or DPP10 is mandatory to have high-affinity blockade of Kv4.2/KCND2 and Kv4.3/KCND3 channels. In contrast, the presence of the Kv4-associated protein KChIP1/KCNIP1 does not enhance the affinity blockade. May dispose of two functional faces (A and B); the two basic residues (Arg-40 and Lys-41) on the alpha-helix side of the peptide that blocks the hERG current (face A) and the typical dyad through which it blocks A-type currents on the beta-sheet side (face B). In adult rat brain, it binds to sites in the striatum, hippocampus, superior colliculus, and cerebellum. It shares the same target in rat brain than AaTX1 (AC Q867F4) and AmmTX3 (AC P60208). In DPP6 knockout mice, A-type currents are much less affected by the toxin than in wild-type mice. This Olivierus martensii (Manchurian scorpion) protein is Potassium channel toxin alpha-KTx 15.2.